The chain runs to 560 residues: Glucose-6-phosphate isomerase, cytosolic (560 aa).

Residue A2 is modified to N-acetylalanine. E361 functions as the Proton donor in the catalytic mechanism. Active-site residues include H392 and K517.

Belongs to the GPI family. As to quaternary structure, homodimer.

Its subcellular location is the cytoplasm. It catalyses the reaction alpha-D-glucose 6-phosphate = beta-D-fructose 6-phosphate. The protein operates within carbohydrate degradation; glycolysis; D-glyceraldehyde 3-phosphate and glycerone phosphate from D-glucose: step 2/4. Its activity is regulated as follows. Inhibited by glycerol-3-P (G3P). This is Glucose-6-phosphate isomerase, cytosolic (PGIC) from Arabidopsis thaliana (Mouse-ear cress).